A 480-amino-acid chain; its full sequence is 2-phosphoxylose phosphatase 1 (480 aa).

The Cytoplasmic segment spans residues 1–6 (MLHRNR). The chain crosses the membrane as a helical; Signal-anchor for type II membrane protein span at residues 7-27 (FLVLLALAGLLAFLSLSLQFF). Over 28-480 (HLIPVSATKN…YYDACHGEGA (453 aa)) the chain is Lumenal. H97 functions as the Nucleophile in the catalytic mechanism. Residues N194, N305, and N354 are each glycosylated (N-linked (GlcNAc...) asparagine). Catalysis depends on D379, which acts as the Proton donor.

It belongs to the histidine acid phosphatase family. As to quaternary structure, interacts with B3GAT3; the interaction increases the 2-phosphoxylose phosphatase activity of PXYLP1 during completion of linkage region formation in a B3GAT3-mediated manner.

It localises to the golgi apparatus membrane. It carries out the reaction 3-O-[beta-D-GlcA-(1-&gt;3)-beta-D-Gal-(1-&gt;3)-beta-D-Gal-(1-&gt;4)-beta-D-2-O-P-Xyl]-L-seryl-[protein] + H2O = 3-O-(beta-D-GlcA-(1-&gt;3)-beta-D-Gal-(1-&gt;3)-beta-D-Gal-(1-&gt;4)-beta-D-Xyl)-L-seryl-[protein] + phosphate. In terms of biological role, responsible for the 2-O-dephosphorylation of xylose in the glycosaminoglycan-protein linkage region of proteoglycans thereby regulating the amount of mature glycosaminoglycan (GAG) chains. Sulfated glycosaminoglycans (GAGs), including heparan sulfate and chondroitin sulfate, are synthesized on the so-called common GAG-protein linkage region (GlcUAbeta1-3Galbeta1-3Galbeta1-4Xylbeta1-O-Ser) of core proteins, which is formed by the stepwise addition of monosaccharide residues by the respective specific glycosyltransferases. Xylose 2-O-dephosphorylation during completion of linkage region formation is a prerequisite for the initiation and efficient elongation of the repeating disaccharide region of GAG chains. The chain is 2-phosphoxylose phosphatase 1 from Mus musculus (Mouse).